A 241-amino-acid polypeptide reads, in one-letter code: DNA repair protein RecO (241 aa).

This sequence belongs to the RecO family.

Involved in DNA repair and RecF pathway recombination. The protein is DNA repair protein RecO of Orientia tsutsugamushi (strain Ikeda) (Rickettsia tsutsugamushi).